The chain runs to 147 residues: uncharacterized protein (147 aa).

A helical transmembrane segment spans residues 13-35 (NSRINLLGILVLNVVCGKSSIFF).

The protein localises to the membrane. This is an uncharacterized protein from Saccharomyces cerevisiae (strain ATCC 204508 / S288c) (Baker's yeast).